Here is a 273-residue protein sequence, read N- to C-terminus: Dermonecrotic toxin LhSicTox-alphaIA2aviii (273 aa).

H5 is an active-site residue. Mg(2+)-binding residues include E25 and D27. H41 serves as the catalytic Nucleophile. 2 disulfide bridges follow: C45/C51 and C47/C190. Residue D85 participates in Mg(2+) binding.

It belongs to the arthropod phospholipase D family. Class II subfamily. Mg(2+) serves as cofactor. As to expression, expressed by the venom gland.

Its subcellular location is the secreted. The catalysed reaction is an N-(acyl)-sphingosylphosphocholine = an N-(acyl)-sphingosyl-1,3-cyclic phosphate + choline. The enzyme catalyses an N-(acyl)-sphingosylphosphoethanolamine = an N-(acyl)-sphingosyl-1,3-cyclic phosphate + ethanolamine. It carries out the reaction a 1-acyl-sn-glycero-3-phosphocholine = a 1-acyl-sn-glycero-2,3-cyclic phosphate + choline. It catalyses the reaction a 1-acyl-sn-glycero-3-phosphoethanolamine = a 1-acyl-sn-glycero-2,3-cyclic phosphate + ethanolamine. Dermonecrotic toxins cleave the phosphodiester linkage between the phosphate and headgroup of certain phospholipids (sphingolipid and lysolipid substrates), forming an alcohol (often choline) and a cyclic phosphate. This toxin acts on sphingomyelin (SM). It may also act on ceramide phosphoethanolamine (CPE), lysophosphatidylcholine (LPC) and lysophosphatidylethanolamine (LPE), but not on lysophosphatidylserine (LPS), and lysophosphatidylglycerol (LPG). It acts by transphosphatidylation, releasing exclusively cyclic phosphate products as second products. Induces dermonecrosis, hemolysis, increased vascular permeability, edema, inflammatory response, and platelet aggregation. This chain is Dermonecrotic toxin LhSicTox-alphaIA2aviii, found in Loxosceles hirsuta (Recluse spider).